A 340-amino-acid polypeptide reads, in one-letter code: MTVQMEYEKDVKVAALDGKKIAVIGYGSQGHAHAQNLRDSGRDVIIGVRPGKSFDKAKEDGFDTYTVTEATKLADVIMILAPDEIQQELYEAEIAPNLEAGNAVGFAHGFNIHFEFIKVPADVDVFMCAPKGPGHLVRRTYEEGFGVPALYAVYQDATGNAKNIAMDWCKGVGAARVGLLETTYKEETEEDLFGEQAVLCGGLTALIEAGFEVLTEAGYAPELAYFEVLHEMKLIVDLIYEGGFKKMRQSISNTAEYGDYVSGPRVITEQVKENMKAVLADIQNGKFANDFVNDYKAGRPKLTAYREQAANLEIEKVGAELRKAMPFVGKNDDDAFKIYN.

One can recognise a KARI N-terminal Rossmann domain in the interval 3–182 (VQMEYEKDVK…GAARVGLLET (180 aa)). NADP(+)-binding positions include 26–29 (YGSQ), Arg49, Ser53, and 83–86 (DEIQ). The active site involves His108. Residue Gly134 participates in NADP(+) binding. Residues 183-328 (TYKEETEEDL…AELRKAMPFV (146 aa)) enclose the KARI C-terminal knotted domain. Residues Asp191, Glu195, Glu227, and Glu231 each contribute to the Mg(2+) site. Substrate is bound at residue Ser252.

It belongs to the ketol-acid reductoisomerase family. It depends on Mg(2+) as a cofactor.

The catalysed reaction is (2R)-2,3-dihydroxy-3-methylbutanoate + NADP(+) = (2S)-2-acetolactate + NADPH + H(+). It catalyses the reaction (2R,3R)-2,3-dihydroxy-3-methylpentanoate + NADP(+) = (S)-2-ethyl-2-hydroxy-3-oxobutanoate + NADPH + H(+). The protein operates within amino-acid biosynthesis; L-isoleucine biosynthesis; L-isoleucine from 2-oxobutanoate: step 2/4. Its pathway is amino-acid biosynthesis; L-valine biosynthesis; L-valine from pyruvate: step 2/4. Involved in the biosynthesis of branched-chain amino acids (BCAA). Catalyzes an alkyl-migration followed by a ketol-acid reduction of (S)-2-acetolactate (S2AL) to yield (R)-2,3-dihydroxy-isovalerate. In the isomerase reaction, S2AL is rearranged via a Mg-dependent methyl migration to produce 3-hydroxy-3-methyl-2-ketobutyrate (HMKB). In the reductase reaction, this 2-ketoacid undergoes a metal-dependent reduction by NADPH to yield (R)-2,3-dihydroxy-isovalerate. The chain is Ketol-acid reductoisomerase (NADP(+)) from Streptococcus pneumoniae (strain CGSP14).